The following is a 262-amino-acid chain: Putative glycyl-radical enzyme activating enzyme HI_0520 (262 aa).

One can recognise a Radical SAM core domain in the interval 20–262 (VEGQGNRSSI…CGINKILTIL (243 aa)). The [4Fe-4S] cluster site is built by Cys-34, Cys-38, and Cys-41. S-adenosyl-L-methionine-binding positions include 40-42 (YCH), Gly-81, and 130-132 (DLK).

This sequence belongs to the organic radical-activating enzymes family. Requires [4Fe-4S] cluster as cofactor.

It catalyses the reaction glycyl-[protein] + reduced [flavodoxin] + S-adenosyl-L-methionine = glycin-2-yl radical-[protein] + semiquinone [flavodoxin] + 5'-deoxyadenosine + L-methionine + H(+). The protein is Putative glycyl-radical enzyme activating enzyme HI_0520 of Haemophilus influenzae (strain ATCC 51907 / DSM 11121 / KW20 / Rd).